The primary structure comprises 1099 residues: Adenylate cyclase type 7 (1099 aa).

Topologically, residues 1–33 (MPAKGRYFLNEGDEGPDQAALYEKYRLTSLHGP) are cytoplasmic. A run of 6 helical transmembrane segments spans residues 34-54 (LLLLLLLVAAATCIALISIAF), 63-83 (QVVLGTAFLMLTLFVALYVLV), 95-117 (ALALLTWACLMVLGSVLMWDSLE), 122-142 (AWEQVPFFLFVVFVVYALLPL), 147-167 (AIVAGVTSTVSHLLVFGAVTR), and 178-198 (LGLQLLANAVILLGGNFTGAF). The Cytoplasmic segment spans residues 199–595 (HKHQLQDASR…YRLVPIPRAR (397 aa)). Mg(2+) contacts are provided by aspartate 286, isoleucine 287, and aspartate 330. ATP contacts are provided by residues 286–291 (DIVGFT), 328–330 (LGD), and arginine 374. The interval 456–476 (DPRSQQPPPPSHHLSKPKGDA) is disordered. Residues 479 to 484 (KMRASV) are mediates regulation of adenylate cyclase activity by C5 alpha-induced G- beta and gamma pathway. The mediates regulation of adenylate cyclase activity by sphingosine 1-phosphate-induced G alpha 13 pathway stretch occupies residues 493–501 (WGAARPFAH). Residues 504–543 (HRESVSSSETPISNGRRQKAIPLRRHRAPDRSASPKGRLE) are disordered. A compositionally biased stretch (polar residues) spans 508-518 (VSSSETPISNG). The modulates adenylate cyclase activity by modulating the binding of G(s)alpha to the high-affinity G(s)alpha binding site in 7C1a/7C2 stretch occupies residues 508-585 (VSSSETPISN…IFLEKGFERE (78 aa)). The segment covering 519–531 (RRQKAIPLRRHRA) has biased composition (basic residues). 3 helical membrane passes run 596–616 (YDFACASLVFVCILLVHLLVM), 621–641 (TLGVSFGLVACLLGLVLSFCF), and 670–689 (LVLVVLTVGSLLTVAIINMP). Residue asparagine 702 is glycosylated (N-linked (GlcNAc...) asparagine). Helical transmembrane passes span 719–738 (LLPYYTCSCILGFIACSVFL), 747–766 (MLLTVALVAYLLLFNLSPCW), and 813–833 (DLKIMVNFYLILFYATLILLS). At 834–1099 (RQIDYYCRLD…TAKFQGLGLN (266 aa)) the chain is on the cytoplasmic side. Residues lysine 950, 1029 to 1031 (DIW), 1036 to 1040 (NVASR), and lysine 1076 contribute to the ATP site.

It belongs to the adenylyl cyclase class-4/guanylyl cyclase family. Mg(2+) serves as cofactor. Mn(2+) is required as a cofactor. In terms of processing, phosphorylated by PRKCD. As to expression, most abundant in heart, spleen and lung.

It localises to the membrane. The catalysed reaction is ATP = 3',5'-cyclic AMP + diphosphate. With respect to regulation, activated by the G protein alpha subunit. Activated by the G protein beta and gamma subunit complex. Activated by GNA13 and GNA12. Ethanol and phorbol 12,13-dibutanoate significantly potentiate adenylate cyclase activity generated in response to the activation of the prostanoid receptor by the agonist prostaglandin E1(1-) in a PKC-dependent manner. Inhibited by lithium. Functionally, catalyzes the formation of cAMP in response to activation of G protein-coupled receptors. Functions in signaling cascades activated namely by thrombin and sphingosine 1-phosphate and mediates regulation of cAMP synthesis through synergistic action of the stimulatory G alpha protein with GNA13. Also, during inflammation, mediates zymosan-induced increase intracellular cAMP, leading to protein kinase A pathway activation in order to modulate innate immune responses through heterotrimeric G proteins G(12/13). Functions in signaling cascades activated namely by dopamine and C5 alpha chain and mediates regulation of cAMP synthesis through synergistic action of the stimulatory G protein with G beta:gamma complex. Functions, through cAMP response regulation, to keep inflammation under control during bacterial infection by sensing the presence of serum factors, such as the bioactive lysophospholipid (LPA) that regulate LPS-induced TNF-alpha production. However, it is also required for the optimal functions of B and T cells during adaptive immune responses by regulating cAMP synthesis in both B and T cells. The polypeptide is Adenylate cyclase type 7 (Mus musculus (Mouse)).